Here is a 181-residue protein sequence, read N- to C-terminus: Ribosome maturation factor RimM (181 aa).

The PRC barrel domain occupies 103–181 (EGDYYWSQLE…EMVVDWDPEF (79 aa)).

This sequence belongs to the RimM family. Binds ribosomal protein uS19.

The protein resides in the cytoplasm. An accessory protein needed during the final step in the assembly of 30S ribosomal subunit, possibly for assembly of the head region. Essential for efficient processing of 16S rRNA. May be needed both before and after RbfA during the maturation of 16S rRNA. It has affinity for free ribosomal 30S subunits but not for 70S ribosomes. In Marinomonas sp. (strain MWYL1), this protein is Ribosome maturation factor RimM.